The chain runs to 437 residues: Protein disulfide-isomerase tmx3a (437 aa).

The first 21 residues, 1 to 21 (MANMRNIILTALLSAIALVSG), serve as a signal peptide directing secretion. Positions 22-126 (YVEGLDDKFT…IIEFTNRVSG (105 aa)) constitute a Thioredoxin domain. Over 22–368 (YVEGLDDKFT…KNTVMSMVET (347 aa)) the chain is Extracellular. Active-site nucleophile residues include Cys48 and Cys51. Cys48 and Cys51 are oxidised to a cystine. The N-linked (GlcNAc...) asparagine glycan is linked to Asn308. The chain crosses the membrane as a helical span at residues 369–389 (APVFSCFVLGLPVGVVVLVIY). Residues 390–437 (ATCTAVPADDEKPEEEATASPALDTHGKKAIESQPESTEKTSEAKKED) lie on the Cytoplasmic side of the membrane. The interval 398-437 (DDEKPEEEATASPALDTHGKKAIESQPESTEKTSEAKKED) is disordered. Over residues 414–437 (THGKKAIESQPESTEKTSEAKKED) the composition is skewed to basic and acidic residues. Residues 434 to 437 (KKED) carry the Di-lysine motif motif.

It localises to the endoplasmic reticulum membrane. The catalysed reaction is Catalyzes the rearrangement of -S-S- bonds in proteins.. Probable disulfide isomerase, which participates in the folding of proteins containing disulfide bonds. May act as a dithiol oxidase. Acts as a regulator of endoplasmic reticulum-mitochondria contact sites via its ability to regulate redox signals. The sequence is that of Protein disulfide-isomerase tmx3a (tmx3a) from Danio rerio (Zebrafish).